A 618-amino-acid chain; its full sequence is 1-deoxy-D-xylulose-5-phosphate synthase (618 aa).

Thiamine diphosphate is bound by residues histidine 75 and 116 to 118 (GHS). Aspartate 147 serves as a coordination point for Mg(2+). Thiamine diphosphate is bound by residues 148 to 149 (GA), asparagine 176, tyrosine 283, and glutamate 364. Asparagine 176 contacts Mg(2+).

It belongs to the transketolase family. DXPS subfamily. In terms of assembly, homodimer. The cofactor is Mg(2+). Thiamine diphosphate serves as cofactor.

The catalysed reaction is D-glyceraldehyde 3-phosphate + pyruvate + H(+) = 1-deoxy-D-xylulose 5-phosphate + CO2. Its pathway is metabolic intermediate biosynthesis; 1-deoxy-D-xylulose 5-phosphate biosynthesis; 1-deoxy-D-xylulose 5-phosphate from D-glyceraldehyde 3-phosphate and pyruvate: step 1/1. Functionally, catalyzes the acyloin condensation reaction between C atoms 2 and 3 of pyruvate and glyceraldehyde 3-phosphate to yield 1-deoxy-D-xylulose-5-phosphate (DXP). This chain is 1-deoxy-D-xylulose-5-phosphate synthase, found in Thiobacillus denitrificans (strain ATCC 25259 / T1).